Reading from the N-terminus, the 282-residue chain is Bifunctional protein FolD 2 (282 aa).

NADP(+) is bound by residues 164-166 and serine 189; that span reads GRS.

The protein belongs to the tetrahydrofolate dehydrogenase/cyclohydrolase family. In terms of assembly, homodimer.

The catalysed reaction is (6R)-5,10-methylene-5,6,7,8-tetrahydrofolate + NADP(+) = (6R)-5,10-methenyltetrahydrofolate + NADPH. It carries out the reaction (6R)-5,10-methenyltetrahydrofolate + H2O = (6R)-10-formyltetrahydrofolate + H(+). The protein operates within one-carbon metabolism; tetrahydrofolate interconversion. Catalyzes the oxidation of 5,10-methylenetetrahydrofolate to 5,10-methenyltetrahydrofolate and then the hydrolysis of 5,10-methenyltetrahydrofolate to 10-formyltetrahydrofolate. The sequence is that of Bifunctional protein FolD 2 from Lactobacillus johnsonii (strain CNCM I-12250 / La1 / NCC 533).